The sequence spans 165 residues: Keratin-associated protein 5-7 (165 aa).

7 repeat units span residues 35 to 38 (CCVP), 41 to 44 (CCKP), 47 to 50 (CCVP), 116 to 119 (CCKP), 126 to 129 (CCKP), 145 to 148 (CCNP), and 155 to 158 (CCVP). The segment at 35–158 (CCVPVCCCKP…CCSQSSCCVP (124 aa)) is 7 X 4 AA repeats of C-C-X-P.

This sequence belongs to the KRTAP type 5 family. As to quaternary structure, interacts with hair keratins. Expressed in hair root but not in skin.

Its function is as follows. In the hair cortex, hair keratin intermediate filaments are embedded in an interfilamentous matrix, consisting of hair keratin-associated protein (KRTAP), which are essential for the formation of a rigid and resistant hair shaft through their extensive disulfide bond cross-linking with abundant cysteine residues of hair keratins. The matrix proteins include the high-sulfur and high-glycine-tyrosine keratins. The polypeptide is Keratin-associated protein 5-7 (KRTAP5-7) (Homo sapiens (Human)).